The primary structure comprises 95 residues: Turripeptide OL184 (95 aa).

Post-translationally, contains 5 disulfide bonds. As to expression, expressed by the venom duct.

The protein resides in the secreted. Acts as a neurotoxin by inhibiting an ion channel. The sequence is that of Turripeptide OL184 from Iotyrris olangoensis (Sea snail).